Consider the following 339-residue polypeptide: tRNA N6-adenosine threonylcarbamoyltransferase (339 aa).

The Fe cation site is built by His-107 and His-111. Substrate contacts are provided by residues 129–133 (LVSGG), Asp-162, Gly-175, and Asn-279. Fe cation is bound at residue Asp-307.

Belongs to the KAE1 / TsaD family. Fe(2+) is required as a cofactor.

It localises to the cytoplasm. It catalyses the reaction L-threonylcarbamoyladenylate + adenosine(37) in tRNA = N(6)-L-threonylcarbamoyladenosine(37) in tRNA + AMP + H(+). Functionally, required for the formation of a threonylcarbamoyl group on adenosine at position 37 (t(6)A37) in tRNAs that read codons beginning with adenine. Is involved in the transfer of the threonylcarbamoyl moiety of threonylcarbamoyl-AMP (TC-AMP) to the N6 group of A37, together with TsaE and TsaB. TsaD likely plays a direct catalytic role in this reaction. The polypeptide is tRNA N6-adenosine threonylcarbamoyltransferase (Campylobacter curvus (strain 525.92)).